The chain runs to 295 residues: Probable protein phosphatase 2C 54 (295 aa).

The region spanning 78 to 289 is the PPM-type phosphatase domain; the sequence is GHGVVSVMGR…ENINVIVIDL (212 aa). 4 residues coordinate Mn(2+): Asp112, Gly113, Asp228, and Glu280.

The protein belongs to the PP2C family. Mg(2+) is required as a cofactor. Requires Mn(2+) as cofactor.

It catalyses the reaction O-phospho-L-seryl-[protein] + H2O = L-seryl-[protein] + phosphate. It carries out the reaction O-phospho-L-threonyl-[protein] + H2O = L-threonyl-[protein] + phosphate. In Arabidopsis thaliana (Mouse-ear cress), this protein is Probable protein phosphatase 2C 54.